The sequence spans 393 residues: Staphopain B (393 aa).

The signal sequence occupies residues 1-36; that stretch reads MNSSCKSRVFNIISIIMVSMLILSLGAFANNNKAKA. Residues 37–219 constitute a propeptide that is removed on maturation; the sequence is DSHSKQLEIN…KVEENEAIQE (183 aa). Catalysis depends on residues C243, H340, and N360.

This sequence belongs to the peptidase C47 family. In terms of assembly, in the cytoplasm, prematurely activated/folded SspB forms a stable non-covalent complex with SspC. Post-translationally, proteolytically cleaved by staphylococcal serine protease (SspA).

The protein localises to the secreted. Its activity is regulated as follows. Prematurely activated/folded staphopain B is inhibited by staphostatin B (SspC), which is probably required to protect staphylococcal cytoplasmic proteins from degradation by SspB. Also inactivated by E-64 and stimulated by EDTA. Functionally, cysteine protease that plays an important role in the inhibition of host innate immune response. Degrades host elastin, fibrogen, fibronectin and kininogen. Blocks phagocytosis of opsonised S.aureus by neutrophils and monocytes by inducing their death in a proteolytic activity-dependent manner. Decreases surface expression of the 'don't eat me' signal CD31 on neutrophils. Cleaves host galectin-3/LGALS3, thereby inhibiting the neutrophil-activating ability of the lectin. The protein is Staphopain B (sspB) of Staphylococcus aureus (strain NCTC 8325 / PS 47).